Reading from the N-terminus, the 932-residue chain is MTNERKEVSEAPVNFGANLGLMLDLYDDFLQDPSSVPEDLQVLFSTIKNDDSIVPALKSTSSQNSDGTIKRVMRLIDNIRQYGHLKADIYPVNPPKRKHVPKLEIEDFDLDQQTLEGISAGIVSDHFADIYDNAYEAILRMEKRYKGPIAFEYTHINNNTERGWLKRRIETPYKVTLNNNEKRALFKQLAYVEGFEKYLHKNFVGAKRFSIEGVDALVPMLQRTITIAAKEGIKNIQIGMAHRGRLNVLTHVLEKPYEMMISEFMHTDPMKFLPEDGSLQLTAGWTGDVKYHLGGIKTTDSYGTMQRIALANNPSHLEIVAPVVEGRTRAAQDDTQRAGAPTTDHHKAMPIIIHGDAAYPGQGINFETMNLGNLKGYSTGGSLHIITNNRIGFTTEPIDARSTTYSTDVAKGYDVPIFHVNADDVEATIEAIDIAMEFRKEFHKDVVIDLVGYRRFGHNEMDEPSITNPVPYQNIRKHDSVEYVFGKKLVNEGVISEDEMHSFIEQVQKELRQAHDKINKADKMDNPDMEKPAELALPLQADEQSFTFDHLKEINDALLTYPDGFNILKKLNKVLEKRHEPFNKEDGLVDWAQAEQLAFATILQDGTPIRLTGQDSERGTFSHRHAVLHDEQTGETYTPLHHVPDQKATFDIHNSPLSEAAVVGFEYGYNVENKKSFNIWEAQYGDFANMSQMIFDNFLFSSRSKWGERSGLTLFLPHAYEGQGPEHSSARLERFLQLAAENNCTVVNLSSSSNYFHLLRAQAASLDSEQMRPLVVMSPKSLLRNKTVAKPIDEFTSGGFEPILTESYQADKVTKVILATGKMFIDLKEALAKNPDESVLLVAIERLYPFPEEEIEALLAQLPNLEEVSWVQEEPKNQGAWLYVYPYVKVLVADKYDLSYHGRIQRAAPAEGDGEIHKLVQNKIIENALKNN.

This sequence belongs to the alpha-ketoglutarate dehydrogenase family. As to quaternary structure, homodimer. Part of the 2-oxoglutarate dehydrogenase (OGDH) complex composed of E1 (2-oxoglutarate dehydrogenase), E2 (dihydrolipoamide succinyltransferase) and E3 (dihydrolipoamide dehydrogenase); the complex contains multiple copies of the three enzymatic components (E1, E2 and E3). The cofactor is thiamine diphosphate.

It catalyses the reaction N(6)-[(R)-lipoyl]-L-lysyl-[protein] + 2-oxoglutarate + H(+) = N(6)-[(R)-S(8)-succinyldihydrolipoyl]-L-lysyl-[protein] + CO2. Its function is as follows. E1 component of the 2-oxoglutarate dehydrogenase (OGDH) complex which catalyzes the decarboxylation of 2-oxoglutarate, the first step in the conversion of 2-oxoglutarate to succinyl-CoA and CO(2). This Staphylococcus aureus (strain JH9) protein is 2-oxoglutarate dehydrogenase E1 component.